A 396-amino-acid polypeptide reads, in one-letter code: Putative isochorismate synthase (396 aa).

Belongs to the isochorismate synthase family.

The catalysed reaction is chorismate = isochorismate. It functions in the pathway siderophore biosynthesis; amonabactin biosynthesis. Involved in the synthesis of amonabactin, a phenolate siderophore containing 2,3-dihydroxybenzoic acid (2,3-DHB). This Aeromonas hydrophila protein is Putative isochorismate synthase (amoA).